A 247-amino-acid chain; its full sequence is Adenylyl-sulfate kinase (247 aa).

The tract at residues 1-24 (MSQSNSDDSASSSTQQAGDGQDDV) is disordered. ATP is bound at residue 55–62 (GLSGCGKS). Serine 146 functions as the Phosphoserine intermediate in the catalytic mechanism.

The protein belongs to the APS kinase family.

It catalyses the reaction adenosine 5'-phosphosulfate + ATP = 3'-phosphoadenylyl sulfate + ADP + H(+). It functions in the pathway sulfur metabolism; hydrogen sulfide biosynthesis; sulfite from sulfate: step 2/3. In terms of biological role, catalyzes the synthesis of activated sulfate. This chain is Adenylyl-sulfate kinase, found in Rhodopirellula baltica (strain DSM 10527 / NCIMB 13988 / SH1).